The following is a 368-amino-acid chain: DNA replication and repair protein RecF (368 aa).

30–37 is a binding site for ATP; sequence GRNGSGKT.

This sequence belongs to the RecF family.

It localises to the cytoplasm. The RecF protein is involved in DNA metabolism; it is required for DNA replication and normal SOS inducibility. RecF binds preferentially to single-stranded, linear DNA. It also seems to bind ATP. This chain is DNA replication and repair protein RecF, found in Chlorobaculum parvum (strain DSM 263 / NCIMB 8327) (Chlorobium vibrioforme subsp. thiosulfatophilum).